The following is a 459-amino-acid chain: uncharacterized protein (459 aa).

This sequence belongs to the Rab GDI family.

It is found in the cytoplasm. The protein localises to the nucleus. This is an uncharacterized protein from Schizosaccharomyces pombe (strain 972 / ATCC 24843) (Fission yeast).